The chain runs to 116 residues: Urease subunit beta (116 aa).

The disordered stretch occupies residues 97-116; that stretch reads IQGPLDAGTAETAPGLPQQP.

This sequence belongs to the urease beta subunit family. In terms of assembly, heterotrimer of UreA (gamma), UreB (beta) and UreC (alpha) subunits. Three heterotrimers associate to form the active enzyme.

Its subcellular location is the cytoplasm. It catalyses the reaction urea + 2 H2O + H(+) = hydrogencarbonate + 2 NH4(+). Its pathway is nitrogen metabolism; urea degradation; CO(2) and NH(3) from urea (urease route): step 1/1. The protein is Urease subunit beta of Paracidovorax citrulli (strain AAC00-1) (Acidovorax citrulli).